A 106-amino-acid chain; its full sequence is Iron-sulfur cluster assembly protein CyaY (106 aa).

Belongs to the frataxin family.

Involved in iron-sulfur (Fe-S) cluster assembly. May act as a regulator of Fe-S biogenesis. The protein is Iron-sulfur cluster assembly protein CyaY of Salmonella arizonae (strain ATCC BAA-731 / CDC346-86 / RSK2980).